A 320-amino-acid chain; its full sequence is 1,5-anhydro-D-fructose reductase (320 aa).

Tyr40 (proton donor) is an active-site residue. His102 contacts substrate. Residues Gln194 and 265–277 (IPGSITPSHIKEN) each bind NADP(+).

Belongs to the aldo/keto reductase family. In terms of assembly, monomer.

It localises to the cytoplasm. The enzyme catalyses 1,5-anhydro-D-glucitol + NADP(+) = 1,5-anhydro-D-fructose + NADPH + H(+). With respect to regulation, inhibited by p-chloromercuribenzoic acid and alkyliodines. Functionally, catalyzes the NADPH-dependent reduction of 1,5-anhydro-D-fructose (AF) to 1,5-anhydro-D-glucitol. The polypeptide is 1,5-anhydro-D-fructose reductase (AKR1E2) (Macaca fascicularis (Crab-eating macaque)).